A 44-amino-acid chain; its full sequence is pyr operon leader peptide (44 aa).

In Escherichia coli O157:H7, this protein is pyr operon leader peptide (pyrL).